We begin with the raw amino-acid sequence, 825 residues long: NT-3 growth factor receptor (825 aa).

A signal peptide spans 1-31 (MDVSLCPAKCSFWRIFLLGSVWLDYVGSVLA). 2 disulfides stabilise this stretch: Cys-32–Cys-38 and Cys-36–Cys-45. The Extracellular segment spans residues 32–429 (CPANCVCSKT…TVTHKPEEDT (398 aa)). Residues Asn-68, Asn-72, and Asn-79 are each glycosylated (N-linked (GlcNAc...) asparagine). 2 LRR repeats span residues 104 to 125 (GLQK…AFAK) and 128 to 149 (HLRY…LFQT). Residues Asn-133 and Asn-163 are each glycosylated (N-linked (GlcNAc...) asparagine). The 50-residue stretch at 160–209 (NFFNCSCDIRWMQLWQEQGEARLDSQSLYCISADGSQLPLFRMNISQCDL) folds into the LRRCT domain. 2 disulfide bridges follow: Cys-164/Cys-189 and Cys-166/Cys-207. 7 N-linked (GlcNAc...) asparagine glycosylation sites follow: Asn-203, Asn-218, Asn-232, Asn-259, Asn-267, Asn-272, and Asn-294. Ig-like C2-type domains lie at 210–300 (PEIS…VALT) and 309–382 (SLVE…IAKN). The cysteines at positions 231 and 284 are disulfide-linked. A disulfide bridge links Cys-320 with Cys-362. Asn-375 and Asn-388 each carry an N-linked (GlcNAc...) asparagine glycan. Residues 430-453 (FGVSIAVGLAAFACVLLVVLFIMI) traverse the membrane as a helical segment. Residues 454-825 (NKYGRRSKFG…ATPIYLDILG (372 aa)) are Cytoplasmic-facing. Position 493 is a phosphoserine (Ser-493). Phosphotyrosine is present on Tyr-516. The Protein kinase domain occupies 538-825 (IVLKRELGEG…ATPIYLDILG (288 aa)). ATP is bound by residues 544–552 (LGEGAFGKV) and Lys-572. Asp-679 serves as the catalytic Proton acceptor. Tyr-705, Tyr-709, and Tyr-710 each carry phosphotyrosine; by autocatalysis.

Belongs to the protein kinase superfamily. Tyr protein kinase family. Insulin receptor subfamily. Exists in a dynamic equilibrium between monomeric (low affinity) and dimeric (high affinity) structures. Binds SH2B2. Interacts with SQSTM1 and KIDINS220. Interacts with PTPRS. Interacts with MAPK8IP3/JIP3. Post-translationally, ligand-mediated auto-phosphorylation. As to expression, isoform 2 expression is restricted to specific areas in adult brain. Isoform 3 transcripts are readily detected early during embryogenesis and are expressed predominantly in adult brain and gonads.

The protein localises to the membrane. It carries out the reaction L-tyrosyl-[protein] + ATP = O-phospho-L-tyrosyl-[protein] + ADP + H(+). Functionally, receptor tyrosine kinase involved in nervous system and probably heart development. Upon binding of its ligand NTF3/neurotrophin-3, NTRK3 autophosphorylates and activates different signaling pathways, including the phosphatidylinositol 3-kinase/AKT and the MAPK pathways, that control cell survival and differentiation. This Mus musculus (Mouse) protein is NT-3 growth factor receptor (Ntrk3).